Here is a 365-residue protein sequence, read N- to C-terminus: Tetratricopeptide repeat protein 19, mitochondrial (365 aa).

Residues 1 to 52 (MFRLLRWRLGRTLLRAAGRRCGGCTARLLPERTGDAGTGAERLRTRGAPARG) constitute a mitochondrion transit peptide. TPR repeat units lie at residues 127 to 160 (TYTYDLMANLAFIRGQLENAEQLFKATMSYLLGG), 220 to 260 (ANTY…CQEI), 269 to 302 (IVLMSDLATTLDAQGHFDDAYIYMQRASDLAREI), and 308 to 341 (HMVLSNLAAILIHRERYTQAKEIYQEALKRAELK).

This sequence belongs to the TTC19 family. Binds to the mature mitochondrial complex III dimer, after the incorporation of the Rieske protein UQCRFS1. Interacts with UQCRC1 and UQCRFS1. Interacts with ZFYVE26 and CHMP4B. In terms of processing, proteolytically cleaved by PARL.

The protein resides in the mitochondrion inner membrane. Its function is as follows. Required for the preservation of the structural and functional integrity of mitochondrial respiratory complex III by allowing the physiological turnover of the Rieske protein UQCRFS1. Involved in the clearance of UQCRFS1 N-terminal fragments, which are produced upon incorporation into the complex III and whose presence is detrimental for its catalytic activity. The polypeptide is Tetratricopeptide repeat protein 19, mitochondrial (Ttc19) (Mus musculus (Mouse)).